The following is a 108-amino-acid chain: uncharacterized protein (108 aa).

Positions 1–15 are enriched in polar residues; it reads MSDSNSRLVYSTQTG. The tract at residues 1–29 is disordered; it reads MSDSNSRLVYSTQTGRIEEPKTAPVRPKG. Over residues 16 to 29 the composition is skewed to basic and acidic residues; that stretch reads RIEEPKTAPVRPKG.

The protein belongs to the SUI1 family.

This is an uncharacterized protein from Salmonella typhi.